A 317-amino-acid chain; its full sequence is Homoserine kinase (317 aa).

95 to 105 (PHSRGLGSSAA) is a binding site for ATP.

The protein belongs to the GHMP kinase family. Homoserine kinase subfamily.

The protein localises to the cytoplasm. The catalysed reaction is L-homoserine + ATP = O-phospho-L-homoserine + ADP + H(+). It participates in amino-acid biosynthesis; L-threonine biosynthesis; L-threonine from L-aspartate: step 4/5. Catalyzes the ATP-dependent phosphorylation of L-homoserine to L-homoserine phosphate. The protein is Homoserine kinase of Mycolicibacterium smegmatis (strain ATCC 700084 / mc(2)155) (Mycobacterium smegmatis).